Consider the following 391-residue polypeptide: Formate-dependent phosphoribosylglycinamide formyltransferase (391 aa).

Residues 18–19 (EL) and Glu78 contribute to the N(1)-(5-phospho-beta-D-ribosyl)glycinamide site. Residues Arg110, Lys151, 156 to 161 (SSGKGQ), 191 to 194 (EEFI), and Glu199 contribute to the ATP site. Positions 115 to 305 (DLASKDLKIK…EFELHLRAFL (191 aa)) constitute an ATP-grasp domain. 2 residues coordinate Mg(2+): Glu264 and Glu276. N(1)-(5-phospho-beta-D-ribosyl)glycinamide is bound by residues Asp283, Lys353, and 360 to 361 (RR).

It belongs to the PurK/PurT family. In terms of assembly, homodimer.

The catalysed reaction is N(1)-(5-phospho-beta-D-ribosyl)glycinamide + formate + ATP = N(2)-formyl-N(1)-(5-phospho-beta-D-ribosyl)glycinamide + ADP + phosphate + H(+). It participates in purine metabolism; IMP biosynthesis via de novo pathway; N(2)-formyl-N(1)-(5-phospho-D-ribosyl)glycinamide from N(1)-(5-phospho-D-ribosyl)glycinamide (formate route): step 1/1. In terms of biological role, involved in the de novo purine biosynthesis. Catalyzes the transfer of formate to 5-phospho-ribosyl-glycinamide (GAR), producing 5-phospho-ribosyl-N-formylglycinamide (FGAR). Formate is provided by PurU via hydrolysis of 10-formyl-tetrahydrofolate. This Prochlorococcus marinus (strain MIT 9301) protein is Formate-dependent phosphoribosylglycinamide formyltransferase.